A 75-amino-acid chain; its full sequence is Serine rich endogenous peptide 4 (75 aa).

The N-terminal stretch at 1 to 31 (MATKTSNLGHLLLSLFILLLFILSQVGVAQA) is a signal peptide. A disordered region spans residues 51–75 (PPPLRGIVKPPIASFHSASPKDKGP). An SCOOP motif motif is present at residues 61–75 (PIASFHSASPKDKGP). A SxS motif essential for MIK2 binding motif is present at residues 67–69 (SAS).

It belongs to the serine rich endogenous peptide (SCOOP) phytocytokine family. Interacts with MIK2 (via extracellular leucine-rich repeat domain); this interaction triggers the formation of complex between MIK2 and the BAK1/SERK3 and SERK4 coreceptors, and subsequent BAK1 activation by phosphorylation. Mostly expressed in leaves and seedlings shoots, and, to a lower extent, in roots, stems, siliques, seeds and flowers.

The protein localises to the cell membrane. It localises to the secreted. Its subcellular location is the extracellular space. It is found in the apoplast. In terms of biological role, brassicaceae-specific phytocytokine (plant endogenous peptide released into the apoplast) perceived by MIK2 in a BAK1/SERK3 and SERK4 coreceptors-dependent manner, that modulates various physiological and antimicrobial processes including growth prevention and reactive oxygen species (ROS) response regulation. Inhibits root growth. Prevents general growth and development. Exhibits antibacterial effects against Pseudomonas syringae pv. tomato DC3000, Ralstonia solanacearum, Bacillus subtilis and Agrobacterium tumefaciens, thus being an antimicrobial peptide (AMP). The sequence is that of Serine rich endogenous peptide 4 from Arabidopsis thaliana (Mouse-ear cress).